The sequence spans 419 residues: UPF0761 membrane protein ACIAD3168 (419 aa).

The next 6 helical transmembrane spans lie at 42-62 (ALTY…LVII), 105-125 (LTVI…STIE), 148-168 (WTII…SSTV), 186-206 (AFIL…ILYW), 212-232 (TVPM…FELL), and 252-272 (AFAA…IVLL).

Belongs to the UPF0761 family.

The protein localises to the cell inner membrane. The chain is UPF0761 membrane protein ACIAD3168 from Acinetobacter baylyi (strain ATCC 33305 / BD413 / ADP1).